The sequence spans 591 residues: Aspartate--tRNA(Asp/Asn) ligase (591 aa).

E174 provides a ligand contact to L-aspartate. The tract at residues 198–201 (QLFK) is aspartate. R220 serves as a coordination point for L-aspartate. ATP contacts are provided by residues 220-222 (RDE) and Q229. H450 is an L-aspartate binding site. E483 serves as a coordination point for ATP. R490 serves as a coordination point for L-aspartate. 535–538 (GLDR) is an ATP binding site.

This sequence belongs to the class-II aminoacyl-tRNA synthetase family. Type 1 subfamily. In terms of assembly, homodimer.

The protein localises to the cytoplasm. The enzyme catalyses tRNA(Asx) + L-aspartate + ATP = L-aspartyl-tRNA(Asx) + AMP + diphosphate. Its function is as follows. Aspartyl-tRNA synthetase with relaxed tRNA specificity since it is able to aspartylate not only its cognate tRNA(Asp) but also tRNA(Asn). Reaction proceeds in two steps: L-aspartate is first activated by ATP to form Asp-AMP and then transferred to the acceptor end of tRNA(Asp/Asn). In Pseudomonas fluorescens (strain Pf0-1), this protein is Aspartate--tRNA(Asp/Asn) ligase.